Consider the following 488-residue polypeptide: Glutamyl-tRNA(Gln) amidotransferase subunit A (488 aa).

Active-site charge relay system residues include Lys-77 and Ser-152. Residue Ser-176 is the Acyl-ester intermediate of the active site.

This sequence belongs to the amidase family. GatA subfamily. As to quaternary structure, heterotrimer of A, B and C subunits.

It carries out the reaction L-glutamyl-tRNA(Gln) + L-glutamine + ATP + H2O = L-glutaminyl-tRNA(Gln) + L-glutamate + ADP + phosphate + H(+). Allows the formation of correctly charged Gln-tRNA(Gln) through the transamidation of misacylated Glu-tRNA(Gln) in organisms which lack glutaminyl-tRNA synthetase. The reaction takes place in the presence of glutamine and ATP through an activated gamma-phospho-Glu-tRNA(Gln). The chain is Glutamyl-tRNA(Gln) amidotransferase subunit A from Streptococcus pneumoniae serotype 19F (strain G54).